A 108-amino-acid polypeptide reads, in one-letter code: MVVKSALLFVLAAILEIGGAWLVWQGVREHRGLTWVGAGVIALGAYGFVAAFQPDAHFGRVLAAYGGVFVAGSLLWGVVADGFRPDRWDITGAAVCLAGVGLIMYAPR.

4 consecutive transmembrane segments (helical) span residues 7–27 (LLFVLAAILEIGGAWLVWQGV), 32–52 (GLTWVGAGVIALGAYGFVAAF), 61–81 (VLAAYGGVFVAGSLLWGVVAD), and 87–107 (RWDITGAAVCLAGVGLIMYAP).

It belongs to the UPF0060 family.

Its subcellular location is the cell membrane. The sequence is that of UPF0060 membrane protein Mvan_3406 from Mycolicibacterium vanbaalenii (strain DSM 7251 / JCM 13017 / BCRC 16820 / KCTC 9966 / NRRL B-24157 / PYR-1) (Mycobacterium vanbaalenii).